A 328-amino-acid polypeptide reads, in one-letter code: Ferredoxin--NADP reductase 2 (328 aa).

FAD contacts are provided by glutamate 37, glutamine 45, tyrosine 50, valine 90, phenylalanine 124, aspartate 285, and threonine 325.

The protein belongs to the ferredoxin--NADP reductase type 2 family. As to quaternary structure, homodimer. Requires FAD as cofactor.

It catalyses the reaction 2 reduced [2Fe-2S]-[ferredoxin] + NADP(+) + H(+) = 2 oxidized [2Fe-2S]-[ferredoxin] + NADPH. The chain is Ferredoxin--NADP reductase 2 from Latilactobacillus sakei subsp. sakei (strain 23K) (Lactobacillus sakei subsp. sakei).